A 369-amino-acid chain; its full sequence is tRNA-specific 2-thiouridylase MnmA (369 aa).

Residues 16–23 (AMSGGVDS) and M42 each bind ATP. The active-site Nucleophile is C110. C110 and C206 are disulfide-bonded. Position 134 (G134) interacts with ATP. The interval 156–158 (KDQ) is interaction with tRNA. The Cysteine persulfide intermediate role is filled by C206.

Belongs to the MnmA/TRMU family.

The protein resides in the cytoplasm. It catalyses the reaction S-sulfanyl-L-cysteinyl-[protein] + uridine(34) in tRNA + AH2 + ATP = 2-thiouridine(34) in tRNA + L-cysteinyl-[protein] + A + AMP + diphosphate + H(+). Catalyzes the 2-thiolation of uridine at the wobble position (U34) of tRNA, leading to the formation of s(2)U34. This is tRNA-specific 2-thiouridylase MnmA from Orientia tsutsugamushi (strain Boryong) (Rickettsia tsutsugamushi).